Consider the following 930-residue polypeptide: Serine/threonine-protein kinase ATG1 (930 aa).

Residues 23 to 326 enclose the Protein kinase domain; sequence FIIDREIGKG…FENFFAHHVV (304 aa). ATP is bound by residues 29–37 and Lys52; that span reads IGKGSFAQV. Asp166 serves as the catalytic Proton acceptor. Disordered stretches follow at residues 336-468, 504-563, 853-874, and 904-930; these read DDIP…TEEE, GQNN…SASP, ISSG…DTEE, and NQAK…YGST. Over residues 337 to 350 the composition is skewed to basic and acidic residues; sequence DIPKPPKRELETIR. The span at 377 to 393 shows a compositional bias: low complexity; the sequence is SPKSPRSSPRSSTVNSS. 2 stretches are compositionally biased toward polar residues: residues 400 to 417 and 504 to 531; these read RQSQ…HNSG and GQNN…TTGA. An ATG13-binding region spans residues 629-897; sequence AAQAIEEFAT…RLNMVRKKQQ (269 aa).

It belongs to the protein kinase superfamily. Ser/Thr protein kinase family. APG1/unc-51/ULK1 subfamily. Homodimer. Dimerization requires the presence of ATG13. Forms a ternary complex with ATG13 and ATG17.

The protein resides in the cytoplasm. Its subcellular location is the preautophagosomal structure membrane. It catalyses the reaction L-seryl-[protein] + ATP = O-phospho-L-seryl-[protein] + ADP + H(+). It carries out the reaction L-threonyl-[protein] + ATP = O-phospho-L-threonyl-[protein] + ADP + H(+). Its function is as follows. Serine/threonine protein kinase involved in the cytoplasm to vacuole transport (Cvt) and found to be essential in autophagy, where it is required for the formation of autophagosomes. Involved in the clearance of protein aggregates which cannot be efficiently cleared by the proteasome. Required for selective autophagic degradation of the nucleus (nucleophagy) as well as for mitophagy which contributes to regulate mitochondrial quantity and quality by eliminating the mitochondria to a basal level to fulfill cellular energy requirements and preventing excess ROS production. Also involved in endoplasmic reticulum-specific autophagic process, in selective removal of ER-associated degradation (ERAD) substrates. Plays a key role in ATG9 and ATG23 cycling through the pre-autophagosomal structure and is necessary to promote ATG18 binding to ATG9 through phosphorylation of ATG9. Catalyzes phosphorylation of ATG4, decreasing the interaction between ATG4 and ATG8 and impairing deconjugation of PE-conjugated forms of ATG8. Contributes to conidiation by regulating the conidial levels of the conidiation-related protein CP15 and mediates fungal oxidation resistance by controlling total superoxide dismutase (SOD) activity. The sequence is that of Serine/threonine-protein kinase ATG1 from Beauveria bassiana (strain ARSEF 2860) (White muscardine disease fungus).